Reading from the N-terminus, the 631-residue chain is Glutamyl-tRNA(Gln) amidotransferase subunit E (631 aa).

It belongs to the GatB/GatE family. GatE subfamily. In terms of assembly, heterodimer of GatD and GatE.

It carries out the reaction L-glutamyl-tRNA(Gln) + L-glutamine + ATP + H2O = L-glutaminyl-tRNA(Gln) + L-glutamate + ADP + phosphate + H(+). Functionally, allows the formation of correctly charged Gln-tRNA(Gln) through the transamidation of misacylated Glu-tRNA(Gln) in organisms which lack glutaminyl-tRNA synthetase. The reaction takes place in the presence of glutamine and ATP through an activated gamma-phospho-Glu-tRNA(Gln). The GatDE system is specific for glutamate and does not act on aspartate. The protein is Glutamyl-tRNA(Gln) amidotransferase subunit E of Methanococcus maripaludis (strain C6 / ATCC BAA-1332).